The chain runs to 376 residues: MKIKKIKLLKALALTGAFGIVATVPVIVYSCSSTDNNGGTGDNNTGGGGSGTDQQQGTTYTPAIKSDVTLSGALSKIYDTTNTGDSRKNTNTLIAEDIKANPENYFTNGEDLKKVEGWSVTVDGSFDSNSVWTGDAYSKWSAVADTHKGVYKSTSKQLNINSLKDLKSQLDTSAKIKAICDESNLVFSTADADSYKIQNELGFTGGDLLHINVTATQAGKTLNMDLGIPVSDLNLKITDLKVSVTASNNSTGNNVAAVSDLTTNFTYNIGIKEEVTAPTEKPNLAKTDKGEVMKVLKALGYTQTGDETKLDNDKVSNSLGLYNCEFTAVSATPVEGSEDKFTIKLKAKPLTDYVWEDGTNTEKEISFEATFTMTGN.

The N-terminal stretch at Met1–Ser30 is a signal peptide. A lipid anchor (N-palmitoyl cysteine) is attached at Cys31. Residue Cys31 is the site of S-diacylglycerol cysteine attachment. The segment at Asp35 to Thr59 is disordered. Residues Gly38–Gly51 are compositionally biased toward gly residues.

The protein belongs to the p35 lipoprotein family.

It localises to the cell membrane. In Malacoplasma penetrans (Mycoplasma penetrans), this protein is Lipoprotein p33.